Consider the following 517-residue polypeptide: GMP synthase [glutamine-hydrolyzing] (517 aa).

Positions 9-199 constitute a Glutamine amidotransferase type-1 domain; that stretch reads RILILDFGSQ…VLNVCGCEGL (191 aa). The Nucleophile role is filled by cysteine 86. Active-site residues include histidine 173 and glutamate 175. Residues 200–392 form the GMPS ATP-PPase domain; the sequence is WTSASIIEDA…LGLPYNMLYR (193 aa). 227-233 is a binding site for ATP; sequence SGGVDSS.

As to quaternary structure, homodimer.

The catalysed reaction is XMP + L-glutamine + ATP + H2O = GMP + L-glutamate + AMP + diphosphate + 2 H(+). It participates in purine metabolism; GMP biosynthesis; GMP from XMP (L-Gln route): step 1/1. In terms of biological role, catalyzes the synthesis of GMP from XMP. The polypeptide is GMP synthase [glutamine-hydrolyzing] (Aliivibrio salmonicida (strain LFI1238) (Vibrio salmonicida (strain LFI1238))).